The primary structure comprises 447 residues: D-ribitol-5-phosphate cytidylyltransferase (447 aa).

This sequence belongs to the IspD/TarI cytidylyltransferase family. IspD subfamily. Homodimer.

It localises to the cytoplasm. Its subcellular location is the cytosol. The catalysed reaction is D-ribitol 5-phosphate + CTP + H(+) = CDP-L-ribitol + diphosphate. It catalyses the reaction D-ribose 5-phosphate + CTP + H(+) = CDP-D-ribose + diphosphate. It carries out the reaction D-ribulose 5-phosphate + CTP + H(+) = CDP-D-ribulose + diphosphate. It participates in protein modification; protein glycosylation. In terms of biological role, cytidylyltransferase required for protein O-linked mannosylation. Catalyzes the formation of CDP-ribitol nucleotide sugar from D-ribitol 5-phosphate. CDP-ribitol is a substrate of FKTN during the biosynthesis of the phosphorylated O-mannosyl trisaccharide (N-acetylgalactosamine-beta-3-N-acetylglucosamine-beta-4-(phosphate-6-)mannose), a carbohydrate structure present in alpha-dystroglycan (DAG1), which is required for binding laminin G-like domain-containing extracellular proteins with high affinity. Shows activity toward other pentose phosphate sugars and mediates formation of CDP-ribulose or CDP-ribose using CTP and ribulose-5-phosphate or ribose-5-phosphate, respectively. Not involved in dolichol production. The protein is D-ribitol-5-phosphate cytidylyltransferase (Crppa) of Rattus norvegicus (Rat).